The sequence spans 131 residues: Aspartate 1-decarboxylase (131 aa).

Ser25 acts as the Schiff-base intermediate with substrate; via pyruvic acid in catalysis. At Ser25 the chain carries Pyruvic acid (Ser). Thr57 is a substrate binding site. Tyr58 functions as the Proton donor in the catalytic mechanism. 73-75 (GSA) is a substrate binding site.

It belongs to the PanD family. As to quaternary structure, heterooctamer of four alpha and four beta subunits. The cofactor is pyruvate. Is synthesized initially as an inactive proenzyme, which is activated by self-cleavage at a specific serine bond to produce a beta-subunit with a hydroxyl group at its C-terminus and an alpha-subunit with a pyruvoyl group at its N-terminus.

The protein localises to the cytoplasm. The catalysed reaction is L-aspartate + H(+) = beta-alanine + CO2. It functions in the pathway cofactor biosynthesis; (R)-pantothenate biosynthesis; beta-alanine from L-aspartate: step 1/1. Functionally, catalyzes the pyruvoyl-dependent decarboxylation of aspartate to produce beta-alanine. This is Aspartate 1-decarboxylase from Leptothrix cholodnii (strain ATCC 51168 / LMG 8142 / SP-6) (Leptothrix discophora (strain SP-6)).